Reading from the N-terminus, the 81-residue chain is U1-sicaritoxin-Li1c (81 aa).

A propeptide spanning residues Ala1–Arg16 is cleaved from the precursor. Cystine bridges form between Cys18/Cys35, Cys26/Cys40, Cys34/Cys53, and Cys42/Cys51. Arg62 is subject to Arginine amide. A propeptide spanning residues Ala66–Asp81 is cleaved from the precursor.

Belongs to the neurotoxin 28 (Litx) family. In terms of tissue distribution, expressed by the venom gland.

It localises to the secreted. Functionally, toxin active against insects (S.frugiperda larvae). May act on sodium (Nav) or calcium (Cav) channels. This chain is U1-sicaritoxin-Li1c, found in Loxosceles intermedia (Brown spider).